The sequence spans 458 residues: MARRLFGTDGVRGVANVHPMTAEMALQLGRALAYIVRSGPHRHRIVIGKDTRLSGYMLEQAIASGICSMGVDVMLCGPLPTPGIAFVTHSMRADAGVVISASHNPYQDNGIKFFSRDGFKLPDELELQIERLVLDAGEDDAGAEEFRALRPTATRIGKAKRIDDAIGRYAQFLKTIFPKELTLDGLTVVVDCAHGAAYHVAPAVFEELGAKVIPLNVKPDGKNINDACGAVHPESMARAVKRHGANLGLALDGDADRVILADEHGNVVDGDAIMALVGRDLLARKALAKRTVVATVMSNLGLERALAPLGGKVVRTAVGDRYVVEEMRRSGYSFGGEQSGHLVFLDHVTTGDGVAAGLNVLAVMVREGKPLSELARCFEPFPQALVNVEVREKRPVAELPGVAKAIAAAEKALGAEGRVLVRPSGTENKVRVLVEGPDAKRARALADGIAAELRQAIG.

Catalysis depends on S102, which acts as the Phosphoserine intermediate. S102, D252, D254, and D256 together coordinate Mg(2+). S102 is modified (phosphoserine).

The protein belongs to the phosphohexose mutase family. Mg(2+) is required as a cofactor. In terms of processing, activated by phosphorylation.

The enzyme catalyses alpha-D-glucosamine 1-phosphate = D-glucosamine 6-phosphate. Functionally, catalyzes the conversion of glucosamine-6-phosphate to glucosamine-1-phosphate. This Anaeromyxobacter dehalogenans (strain 2CP-C) protein is Phosphoglucosamine mutase.